Here is a 316-residue protein sequence, read N- to C-terminus: uncharacterized protein (316 aa).

Residues 16–89 form the S4 RNA-binding domain; sequence ERLDKFLARA…IPINIIYEDE (74 aa). Aspartate 140 is a catalytic residue.

Belongs to the pseudouridine synthase RluA family.

The catalysed reaction is a uridine in RNA = a pseudouridine in RNA. This is an uncharacterized protein from Aquifex aeolicus (strain VF5).